The primary structure comprises 400 residues: Transposase for insertion sequence element ISRM3 (400 aa).

This sequence belongs to the transposase mutator family.

Required for the transposition of the insertion element. This is Transposase for insertion sequence element ISRM3 from Rhizobium meliloti (strain 1021) (Ensifer meliloti).